A 354-amino-acid chain; its full sequence is Protein-glutamate methylesterase/protein-glutamine glutaminase 2 (354 aa).

The 118-residue stretch at 3-120 (RVVVVDDSMS…PADLADYARD (118 aa)) folds into the Response regulatory domain. The residue at position 54 (D54) is a 4-aspartylphosphate. Residues 164–354 (ATRLSRVIAI…MGARLSEALQ (191 aa)) form the CheB-type methylesterase domain. Catalysis depends on residues S176, H202, and D298.

This sequence belongs to the CheB family. Phosphorylated by CheA. Phosphorylation of the N-terminal regulatory domain activates the methylesterase activity.

The protein resides in the cytoplasm. The enzyme catalyses [protein]-L-glutamate 5-O-methyl ester + H2O = L-glutamyl-[protein] + methanol + H(+). It catalyses the reaction L-glutaminyl-[protein] + H2O = L-glutamyl-[protein] + NH4(+). Involved in chemotaxis. Part of a chemotaxis signal transduction system that modulates chemotaxis in response to various stimuli. Catalyzes the demethylation of specific methylglutamate residues introduced into the chemoreceptors (methyl-accepting chemotaxis proteins or MCP) by CheR. Also mediates the irreversible deamidation of specific glutamine residues to glutamic acid. This Burkholderia thailandensis (strain ATCC 700388 / DSM 13276 / CCUG 48851 / CIP 106301 / E264) protein is Protein-glutamate methylesterase/protein-glutamine glutaminase 2.